The primary structure comprises 151 residues: Putative pre-16S rRNA nuclease (151 aa).

Belongs to the YqgF nuclease family.

The protein localises to the cytoplasm. Functionally, could be a nuclease involved in processing of the 5'-end of pre-16S rRNA. The protein is Putative pre-16S rRNA nuclease of Neisseria gonorrhoeae (strain ATCC 700825 / FA 1090).